The primary structure comprises 200 residues: Phospholipase A2 inhibitor gamma subunit B (200 aa).

The N-terminal stretch at 1–19 (MKSFLFCCLLGTFLAIGMC) is a signal peptide. 8 disulfides stabilise this stretch: C22-C46, C25-C32, C39-C67, C73-C94, C95-C100, C120-C145, C138-C165, and C171-C191. Residue N33 is glycosylated (N-linked (GlcNAc...) asparagine).

This sequence belongs to the CNF-like-inhibitor family. In terms of assembly, heterodimer of subunit A and subunit B. As to expression, expressed by the liver.

Its subcellular location is the secreted. Its function is as follows. Inhibits the enzymatic activity of phospholipase A2 (PA2). This is Phospholipase A2 inhibitor gamma subunit B from Gloydius brevicaudus siniticus (Chinese mamushi).